The chain runs to 287 residues: Bifunctional protein FolD (287 aa).

Residues 165–167, threonine 192, and valine 233 contribute to the NADP(+) site; that span reads GRG.

Belongs to the tetrahydrofolate dehydrogenase/cyclohydrolase family. Homodimer.

The enzyme catalyses (6R)-5,10-methylene-5,6,7,8-tetrahydrofolate + NADP(+) = (6R)-5,10-methenyltetrahydrofolate + NADPH. It catalyses the reaction (6R)-5,10-methenyltetrahydrofolate + H2O = (6R)-10-formyltetrahydrofolate + H(+). It participates in one-carbon metabolism; tetrahydrofolate interconversion. Catalyzes the oxidation of 5,10-methylenetetrahydrofolate to 5,10-methenyltetrahydrofolate and then the hydrolysis of 5,10-methenyltetrahydrofolate to 10-formyltetrahydrofolate. The chain is Bifunctional protein FolD from Cutibacterium acnes (strain DSM 16379 / KPA171202) (Propionibacterium acnes).